We begin with the raw amino-acid sequence, 270 residues long: Regulatory protein RecX (270 aa).

This sequence belongs to the RecX family.

It localises to the cytoplasm. Modulates RecA activity. This chain is Regulatory protein RecX, found in Bacillus mycoides (strain KBAB4) (Bacillus weihenstephanensis).